Consider the following 503-residue polypeptide: Zinc finger protein JACKDAW (503 aa).

The span at 32–51 (IPDLNPNSNPNPNAKPNSSS) shows a compositional bias: low complexity. The interval 32–68 (IPDLNPNSNPNPNAKPNSSSAKKKRNQPGTPDPDADV) is disordered. A Phosphoserine modification is found at serine 72. C2H2-type zinc fingers lie at residues 82 to 104 (FVCEICNKGFQRDQNLQLHRRGH) and 124 to 154 (YICPIKTCVHHDASRALGDLTGIKKHYSRKH). 2 consecutive short sequence motifs (nuclear localization signal) follow at residues 100–107 (HRRGHNLP) and 146–153 (IKKHYSRK). The segment at 159–182 (WKCEKCSKKYAVQSDWKAHAKTCG) adopts a C2H2-type 2; degenerate zinc-finger fold. Residues cysteine 161, cysteine 164, histidine 177, cysteine 181, cysteine 188, cysteine 190, histidine 203, and cysteine 207 each contribute to the Zn(2+) site. The CCHC-type 2; atypical zinc-finger motif lies at 186-209 (YKCDCGTLFSRKDSFITHRAFCDA). An SHR-binding region spans residues 196–208 (RKDSFITHRAFCD). Disordered stretches follow at residues 301-417 (SSSS…SSPM) and 432-465 (RENHNRAPPPLSGVSTSSVDNNPFQSNRSGLNPA). Residues 319-358 (TSTNPSLTLSSSSTSQQTSASLQHQTLKDSSFSPLFSSSS) are compositionally biased toward low complexity. Over residues 381-392 (MGSTRSNSSTAP) the composition is skewed to polar residues. Residues 396-407 (AGPTMTSSSATA) show a composition bias toward low complexity. Residues 444–465 (GVSTSSVDNNPFQSNRSGLNPA) show a composition bias toward polar residues.

As to quaternary structure, interacts with SHR, SCR, MGP and itself. The heterodimer with SHR involves its zinc fingers. Interacts with SIEL. Binds to RGA and SCL3 competitively in the nucleus. In terms of tissue distribution, expressed in the quiescent center, the ground tissue stem cells and to a lesser extent in mature cortex and endodermis cells.

The protein resides in the nucleus. Functionally, transcription factor that, together with BIB, regulates tissue boundaries and asymmetric cell division by a rapid up-regulation of 'SCARECROW' (SCR), thus controlling the nuclear localization of 'SHORT-ROOT' (SHR) and restricting its action. Binds DNA via its zinc fingers. Recognizes and binds to SCL3 promoter sequence 5'-AGACAA-3' to promote its expression when in complex with RGA. Confines CYCD6 expression to the cortex-endodermis initial/daughter (CEI/CEID) tissues. Required for radial patterning and stem cell maintenance. Counteracted by 'MAGPIE' (MGP). Binds to the SCR and MGP promoter sequences. Controls position-dependent signals that regulate epidermal-cell-type patterning. In Arabidopsis thaliana (Mouse-ear cress), this protein is Zinc finger protein JACKDAW.